Here is a 295-residue protein sequence, read N- to C-terminus: Ribosomal protein L11 methyltransferase (295 aa).

The S-adenosyl-L-methionine site is built by threonine 146, glycine 167, aspartate 189, and asparagine 231.

This sequence belongs to the methyltransferase superfamily. PrmA family.

The protein resides in the cytoplasm. The catalysed reaction is L-lysyl-[protein] + 3 S-adenosyl-L-methionine = N(6),N(6),N(6)-trimethyl-L-lysyl-[protein] + 3 S-adenosyl-L-homocysteine + 3 H(+). In terms of biological role, methylates ribosomal protein L11. This Vibrio parahaemolyticus serotype O3:K6 (strain RIMD 2210633) protein is Ribosomal protein L11 methyltransferase.